A 90-amino-acid chain; its full sequence is MALNLEKKQEIIKAFATKENDTGSCEVQIALLNERIKLLTEHLKANPKDHSSRLGLLKLVAQRRNLLKYIKRTDHARYVVLIEKLGIKDR.

Belongs to the universal ribosomal protein uS15 family. In terms of assembly, part of the 30S ribosomal subunit. Forms a bridge to the 50S subunit in the 70S ribosome, contacting the 23S rRNA.

Functionally, one of the primary rRNA binding proteins, it binds directly to 16S rRNA where it helps nucleate assembly of the platform of the 30S subunit by binding and bridging several RNA helices of the 16S rRNA. Forms an intersubunit bridge (bridge B4) with the 23S rRNA of the 50S subunit in the ribosome. This Helicobacter pylori (strain Shi470) protein is Small ribosomal subunit protein uS15.